Consider the following 156-residue polypeptide: S-ribosylhomocysteine lyase (156 aa).

Histidine 56, histidine 60, and cysteine 123 together coordinate Fe cation.

It belongs to the LuxS family. In terms of assembly, homodimer. The cofactor is Fe cation.

The catalysed reaction is S-(5-deoxy-D-ribos-5-yl)-L-homocysteine = (S)-4,5-dihydroxypentane-2,3-dione + L-homocysteine. Functionally, involved in the synthesis of autoinducer 2 (AI-2) which is secreted by bacteria and is used to communicate both the cell density and the metabolic potential of the environment. The regulation of gene expression in response to changes in cell density is called quorum sensing. Catalyzes the transformation of S-ribosylhomocysteine (RHC) to homocysteine (HC) and 4,5-dihydroxy-2,3-pentadione (DPD). The sequence is that of S-ribosylhomocysteine lyase from Staphylococcus saprophyticus subsp. saprophyticus (strain ATCC 15305 / DSM 20229 / NCIMB 8711 / NCTC 7292 / S-41).